The primary structure comprises 156 residues: Small ribosomal subunit protein uS7 (156 aa).

This sequence belongs to the universal ribosomal protein uS7 family. As to quaternary structure, part of the 30S ribosomal subunit. Contacts proteins S9 and S11.

Its function is as follows. One of the primary rRNA binding proteins, it binds directly to 16S rRNA where it nucleates assembly of the head domain of the 30S subunit. Is located at the subunit interface close to the decoding center, probably blocks exit of the E-site tRNA. This Solidesulfovibrio magneticus (strain ATCC 700980 / DSM 13731 / RS-1) (Desulfovibrio magneticus) protein is Small ribosomal subunit protein uS7.